The following is a 294-amino-acid chain: MPWIQVKLNATSENAELISDMLVEETGALSVTFLDAKDTPIFEPLPGETRLWGETDIVALYDAETDMDLVITQLKASAVLDDNFAYKIEQLEDKDWEREWMDNFHPMKFGERLWICPSWREIPEPDAINVMLDPGLAFGTGTHATTALCLEWLESIDLTGKTVIDFGCGSGILAIAAIKLGAAKVVGIDIDPQAITASKDNATRNGVAEQLTLFLPQDQPENLVADVVVANILAAPLRELSSIITAHVKPGGALAMSGVLDTQANNVASYYSDNFTLDAIAEQQEWCRISGIKK.

Residues Thr-146, Gly-167, Asp-189, and Asn-231 each coordinate S-adenosyl-L-methionine.

This sequence belongs to the methyltransferase superfamily. PrmA family.

The protein resides in the cytoplasm. The catalysed reaction is L-lysyl-[protein] + 3 S-adenosyl-L-methionine = N(6),N(6),N(6)-trimethyl-L-lysyl-[protein] + 3 S-adenosyl-L-homocysteine + 3 H(+). Methylates ribosomal protein L11. This chain is Ribosomal protein L11 methyltransferase, found in Aliivibrio salmonicida (strain LFI1238) (Vibrio salmonicida (strain LFI1238)).